A 621-amino-acid chain; its full sequence is GPI-anchor transamidase component GPAA1 (621 aa).

Topologically, residues 1 to 19 (MGLLSDPVRRRALARIVLR) are cytoplasmic. A helical membrane pass occupies residues 20-41 (LNTPLCVLSYVAGIAWFLALAF). The Lumenal portion of the chain corresponds to 42-370 (PPLTQRTYMS…LLPALSRFVS (329 aa)). Residues Tyr49 and Ser51 each coordinate a 2-acyl-6-[6-phosphoethanolamine-alpha-D-mannosyl-(1-&gt;2)-6-phosphoethanolamine-alpha-D-mannosyl-(1-&gt;6)-2-phosphoethanolamine-alpha-D-mannosyl-(1-&gt;4)-alpha-D-glucosaminyl]-1-(1-radyl,2-acyl-sn-glycero-3-phospho)-1D-myo-inositol. The N-linked (GlcNAc...) asparagine glycan is linked to Asn203. Cys259 and Cys266 form a disulfide bridge. Residues His354, Gln355, and Ser356 each coordinate a 2-acyl-6-[6-phosphoethanolamine-alpha-D-mannosyl-(1-&gt;2)-6-phosphoethanolamine-alpha-D-mannosyl-(1-&gt;6)-2-phosphoethanolamine-alpha-D-mannosyl-(1-&gt;4)-alpha-D-glucosaminyl]-1-(1-radyl,2-acyl-sn-glycero-3-phospho)-1D-myo-inositol. Gln355 serves as a coordination point for Mg(2+). A helical membrane pass occupies residues 371 to 393 (IGLYMPATGFLLLVLGLKALELW). Residues 394 to 425 (MQLHQAGVNPEEAGKAPSPGTPLLPTQGVGLA) are Cytoplasmic-facing. The chain crosses the membrane as a helical span at residues 426–450 (SLTAPLLISQAMGLALYFLPVLGQH). Residues 451–462 (LATQHFPVAEAE) are Lumenal-facing. Residues 463 to 483 (AVVLTLLAIYVAGLALPHNTH) traverse the membrane as a helical segment. The Cytoplasmic portion of the chain corresponds to 484 to 495 (RVVNSQVPDRGW). Helical transmembrane passes span 496 to 519 (MALK…LNFS) and 520 to 536 (LGFL…ALAK). The Cytoplasmic portion of the chain corresponds to 537 to 540 (PHGP). The chain crosses the membrane as a helical span at residues 541 to 563 (RTLYAALLVVTSPAVTLFGSLFL). Residues 564-597 (WRELLEVPLSLAEGWQLFLTALAQGVLEHYTYGA) are Lumenal-facing. Residues 598 to 619 (LLFPILALGLYPCWLLFWNVLF) form a helical membrane-spanning segment. Over 620-621 (WK) the chain is Cytoplasmic.

Heteropentamer. Part of the GPI-anchor transamidase complex, consisting of PIGK, PIGT, PIGS, PIGU and GAA1. Interacts with PIGK. As to expression, ubiquitously expressed in fetal and adult tissues. Expressed at higher levels in fetal tissues than adult tissues. In embryos abundant in the choroid plexus, skeletal muscle,.

It localises to the endoplasmic reticulum membrane. Its pathway is glycolipid biosynthesis; glycosylphosphatidylinositol-anchor biosynthesis. Its function is as follows. Component of the glycosylphosphatidylinositol-anchor (GPI-anchor) transamidase (GPI-T) complex that catalyzes the formation of the linkage between a proprotein and a GPI-anchor and participates in GPI anchored protein biosynthesis. Binds GPI-anchor. In Mus musculus (Mouse), this protein is GPI-anchor transamidase component GPAA1.